A 382-amino-acid polypeptide reads, in one-letter code: MSRPLVITEGMMIGVLLMLAPINALLLGFVQSTPDNNKTVREFNVYWNVPTFMCHKYGLRFEEVSEKYGILQNWMDKFRGEEIAILYDPGMFPALLKDPNGNVVARNGGVPQLGNLTKHLQVFRDHLINQIPDKSFPGVGVIDFESWRPIFRQNWASLQPYKKLSVEVVRREHPFWDDQRVEQEAKRRFEKYGQLFMEETLKAAKRMRPAANWGYYAYPYCYNLTPNQPSAQCEATTMQENDKMSWLFESEDVLLPSVYLRWNLTSGERVGLVGGRVKEALRIARQMTTSRKKVLPYYWYKYQDRRDTDLSRADLEATLRKITDLGADGFIIWGSSDDINTKAKCLQFREYLNNELGPAVKRIALNNNANDRLTVDVSVDQV.

A signal peptide (or 24) is located at residues methionine 1 to glycine 28. Positions phenylalanine 29–threonine 33 are excised as a propeptide. Cystine bridges form between cysteine 54–cysteine 345 and cysteine 221–cysteine 233. N-linked (GlcNAc...) asparagine glycosylation occurs at asparagine 115. Glutamate 145 functions as the Proton donor in the catalytic mechanism. An N-linked (GlcNAc...) (complex) asparagine glycan is attached at asparagine 263.

This sequence belongs to the glycosyl hydrolase 56 family. As to quaternary structure, homotetramer. In terms of processing, N-glycosylated. Glycans found include a majority of small oligosaccharides (Man1-3GlcNAc2), most of which are either alpha 1,3-monofucosylated or alpha 1,3-(alpha 1,6-)difucosylated at the innermost GlcNAc residue, approximately 5% of high-mannose type structures, and 8% contains the terminal trisaccharide GalNAc beta 1-4[Fuc alpha 1-3]GlcNAc beta 1-in beta 1,2-linkage to the core alpha 1,3-mannosyl residue. As to expression, expressed in the venom glands of worker bees. It is also detected in the testes of drones but not in the queen-bee venom glands or in pupae.

Its subcellular location is the secreted. It carries out the reaction Random hydrolysis of (1-&gt;4)-linkages between N-acetyl-beta-D-glucosamine and D-glucuronate residues in hyaluronate.. In terms of biological role, hydrolyzes high molecular weight hyaluronic acid to produce small oligosaccharides. The protein is Hyaluronidase of Apis mellifera (Honeybee).